The chain runs to 350 residues: uncharacterized protein (350 aa).

Positions 1–26 (MKKSGWLVVALIALVVLGVVTSIAVN) are cleaved as a signal peptide.

This is an uncharacterized protein from Archaeoglobus fulgidus (strain ATCC 49558 / DSM 4304 / JCM 9628 / NBRC 100126 / VC-16).